The sequence spans 388 residues: L-lactate dehydrogenase (388 aa).

Residues 1-380 form the FMN hydroxy acid dehydrogenase domain; sequence MIISAASDYR…SADALSRVTR (380 aa). Tyrosine 24 contributes to the substrate binding site. FMN-binding residues include serine 106 and glutamine 127. A substrate-binding site is contributed by tyrosine 129. Threonine 155 contacts FMN. A substrate-binding site is contributed by arginine 164. Residue lysine 251 coordinates FMN. Residue histidine 275 is the Proton acceptor of the active site. Substrate is bound at residue arginine 278. 306–330 lines the FMN pocket; that stretch reads DSGIRSGLDVVRMLALGADAVLLGR.

Belongs to the FMN-dependent alpha-hydroxy acid dehydrogenase family. It depends on FMN as a cofactor.

It localises to the cell inner membrane. It catalyses the reaction (S)-lactate + A = pyruvate + AH2. Its function is as follows. Catalyzes the conversion of L-lactate to pyruvate. Is coupled to the respiratory chain. This chain is L-lactate dehydrogenase, found in Xanthomonas oryzae pv. oryzae (strain MAFF 311018).